A 130-amino-acid chain; its full sequence is Small ribosomal subunit protein uS8 (130 aa).

This sequence belongs to the universal ribosomal protein uS8 family. In terms of assembly, part of the 30S ribosomal subunit. Contacts proteins S5 and S12.

In terms of biological role, one of the primary rRNA binding proteins, it binds directly to 16S rRNA central domain where it helps coordinate assembly of the platform of the 30S subunit. This is Small ribosomal subunit protein uS8 from Actinobacillus pleuropneumoniae serotype 5b (strain L20).